The primary structure comprises 381 residues: Orotidine 5'-phosphate decarboxylase (381 aa).

Substrate-binding positions include Asp-42, 64–66, 99–108, Tyr-333, and Arg-352; these read KTH and DRKFGDIGHT. Lys-101 acts as the Proton donor in catalysis. The interval 311 to 333 is disordered; it reads LPPEDEDQQTNGSVGGDGQGQQY.

Belongs to the OMP decarboxylase family.

It carries out the reaction orotidine 5'-phosphate + H(+) = UMP + CO2. Its pathway is pyrimidine metabolism; UMP biosynthesis via de novo pathway; UMP from orotate: step 2/2. This chain is Orotidine 5'-phosphate decarboxylase (ura3), found in Hypocrea jecorina (Trichoderma reesei).